A 52-amino-acid polypeptide reads, in one-letter code: Ribosome biogenesis protein Nop10 (52 aa).

This sequence belongs to the NOP10 family.

In terms of biological role, involved in ribosome biogenesis; more specifically in 18S rRNA pseudouridylation and in cleavage of pre-rRNA. In Methanococcus vannielii (strain ATCC 35089 / DSM 1224 / JCM 13029 / OCM 148 / SB), this protein is Ribosome biogenesis protein Nop10.